Reading from the N-terminus, the 468-residue chain is MKKYQQLAEQLREQIASGIWQPGDRLPSLRDQVALSGMSFMTVSHAYQLLESQGYIIARPQSGYYVAPQAIKMPKAPVIPVTRDEAVDINTYIFDMLQASRDPSVVPFASAFPDPRLFPLQQLNRSLAQVSKTATAMSVIENLPPGNAELRQAIARRYALQGITISPDEIVITAGALEALNLSLQAVTEPGDWVIVENPCFYGALQALERLRLKALSVATDVKEGIDLQALELALQEYPVKACWLMTNSQNPLGFTLTPQKKAQLVALLNQYNVTLIEDDVYSELYFGREKPLPAKAWDRHDGVLHCSSFSKCLVPGFRIGWVAAGKHARKIQRLQLMSTLSTSSPMQLALVDYLSTRRYDAHLRRLRRQLAERKQRAWQALLRYLPAEVKIHHNDSGYFLWLELPEPLDAGELSLAALTHHISIAPGKMFSTGENWSRFFRFNTAWQWGEREEQAVKQLGKLIQERL.

One can recognise an HTH gntR-type domain in the interval Met-1 to Gln-69. Residue Lys-312 is modified to N6-(pyridoxal phosphate)lysine.

This sequence in the C-terminal section; belongs to the class-I pyridoxal-phosphate-dependent aminotransferase family.

This is an uncharacterized protein from Escherichia coli (strain K12).